A 1826-amino-acid polypeptide reads, in one-letter code: Kinesin-like protein KIF13B (1826 aa).

A Kinesin motor domain is found at 5-353 (KVKVAVRIRP…LRYADRAKHI (349 aa)). 103 to 110 (GQTGSGKS) is a binding site for ATP. A coiled-coil region spans residues 364 to 439 (NARIIRDLRE…ESLGISLQSS (76 aa)). One can recognise an FHA domain in the interval 471-535 (TLIGSANSQD…LHHGDRILWG (65 aa)). The segment at 546-582 (KKKKKAEREDEDQDPSMKNENSSEQLDVDGDSSSEVS) is disordered. A compositionally biased stretch (polar residues) spans 561-570 (SMKNENSSEQ). Coiled coils occupy residues 607–710 (MQSI…LDKR), 752–772 (SLEKLDNRLLDMRDLYQEWKE), and 1096–1143 (LNAL…ERNA). Ser-661 is modified (phosphoserine). The segment at 1367–1420 (EQLTGKGKLSRRSISSPNVNRLSGSRQDLIPSYSLGSNKGRWESQQDVSQTTVS) is disordered. 2 stretches are compositionally biased toward polar residues: residues 1378–1392 (RSISSPNVNRLSGSR) and 1409–1420 (ESQQDVSQTTVS). The residue at position 1379 (Ser-1379) is a Phosphoserine. Ser-1381 carries the phosphoserine; by MARK2 modification. Residues Ser-1382 and Ser-1391 each carry the phosphoserine modification. Ser-1410 bears the Phosphoserine; by MARK2 mark. A phosphoserine mark is found at Ser-1432, Ser-1438, and Ser-1537. At Thr-1545 the chain carries Phosphothreonine. The residue at position 1559 (Ser-1559) is a Phosphoserine. Residues 1579–1607 (SDALGPGLDAAAPPGSMPTAPEAEPEAPI) show a composition bias toward low complexity. 2 disordered regions span residues 1579 to 1650 (SDAL…RVRR) and 1662 to 1698 (MLAGDPGCSPGAEGNAPAPGAGGQALASDSEEADEVP). Residues 1608–1624 (SHPPPPTAVPAEEPPGP) show a composition bias toward pro residues. Ser-1644 is subject to Phosphoserine. The segment covering 1671–1688 (PGAEGNAPAPGAGGQALA) has biased composition (low complexity). The 43-residue stretch at 1721–1763 (GPADFQEGTWVGVELDLPSGKNDGSIGGKQYFRCNPGYGLLVR) folds into the CAP-Gly domain. Ser-1797 carries the post-translational modification Phosphoserine.

It belongs to the TRAFAC class myosin-kinesin ATPase superfamily. Kinesin family. As to quaternary structure, binds to DLG1 and DLG4. Interacts (when phosphorylated at Ser-1381 and Ser-1410) with 14-3-3. Post-translationally, phosphorylated at Ser-1381 and Ser-1410 by MARK2, promoting interaction with 14-3-3 and inhibiting microtubule-dependent accumulation and formation of axons. Ubiquitous.

It is found in the cytoplasm. The protein resides in the cytoskeleton. It localises to the cell projection. The protein localises to the axon. Its function is as follows. Involved in reorganization of the cortical cytoskeleton. Regulates axon formation by promoting the formation of extra axons. May be functionally important for the intracellular trafficking of MAGUKs and associated protein complexes. The chain is Kinesin-like protein KIF13B (KIF13B) from Homo sapiens (Human).